Reading from the N-terminus, the 328-residue chain is MSWLNTKKASCWRSSGRSATKSVTTNDAGTGNPAEQPARGAKQQPATETSRAGRDLRAAIVVGLSIGLVLIAVLVFVPRVWVAIVAVATLVATHEVVRRLREAGYLIPVIPLLIGGQAAVWLTWPFGAVGALAGFGGMVVVCMIWRLFMQDSVTRPTTGGAPSPGNYLSDVSATVFLAVWVPLFCSFGAMLVYPENGSGWVFCMMIAVIASDVGGYAVGVLFGKHPMVPTISPKKSWEGFAGSLVCGITATIITATFLVGKTPWIGALLGVLFVLTTALGDLVESQVKRDLGIKDMGRLLPGHGGLMDRLDGILPSAVAAWIVLTLLP.

Over residues 15–29 (SGRSATKSVTTNDAG) the composition is skewed to polar residues. Residues 15-50 (SGRSATKSVTTNDAGTGNPAEQPARGAKQQPATETS) are disordered. 7 consecutive transmembrane segments (helical) span residues 58–78 (AAIV…VFVP), 103–123 (AGYL…VWLT), 124–144 (WPFG…VCMI), 173–193 (ATVF…MLVY), 202–222 (FCMM…GVLF), 239–259 (GFAG…TFLV), and 263–283 (PWIG…GDLV).

This sequence belongs to the CDS family.

The protein resides in the cell membrane. It carries out the reaction a 1,2-diacyl-sn-glycero-3-phosphate + CTP + H(+) = a CDP-1,2-diacyl-sn-glycerol + diphosphate. It functions in the pathway phospholipid metabolism; CDP-diacylglycerol biosynthesis; CDP-diacylglycerol from sn-glycerol 3-phosphate: step 3/3. This chain is Phosphatidate cytidylyltransferase (cdsA), found in Mycobacterium tuberculosis (strain CDC 1551 / Oshkosh).